We begin with the raw amino-acid sequence, 308 residues long: Putative hydrolase MT0526 (308 aa).

The tract at residues 1 to 48 is disordered; sequence MMVSSHLGSPDQAGHVDLASPADPPPPDASASHSPVDMPAPVAAAGSD. Residue aspartate 62 is the Nucleophile of the active site. Mg(2+) contacts are provided by aspartate 62, aspartate 64, and aspartate 237. Aspartate 64 functions as the Proton donor in the catalytic mechanism.

This sequence belongs to the HAD-like hydrolase superfamily. SerB family. Requires Mg(2+) as cofactor.

This chain is Putative hydrolase MT0526, found in Mycobacterium tuberculosis (strain CDC 1551 / Oshkosh).